A 358-amino-acid chain; its full sequence is Chorismate synthase (358 aa).

Arginine 46 provides a ligand contact to NADP(+). Residues 123–125 (RSS), 235–236 (NA), glycine 275, 290–294 (KPTPS), and arginine 316 each bind FMN.

This sequence belongs to the chorismate synthase family. Homotetramer. FMNH2 serves as cofactor.

The enzyme catalyses 5-O-(1-carboxyvinyl)-3-phosphoshikimate = chorismate + phosphate. It participates in metabolic intermediate biosynthesis; chorismate biosynthesis; chorismate from D-erythrose 4-phosphate and phosphoenolpyruvate: step 7/7. Functionally, catalyzes the anti-1,4-elimination of the C-3 phosphate and the C-6 proR hydrogen from 5-enolpyruvylshikimate-3-phosphate (EPSP) to yield chorismate, which is the branch point compound that serves as the starting substrate for the three terminal pathways of aromatic amino acid biosynthesis. This reaction introduces a second double bond into the aromatic ring system. In Sulfurimonas denitrificans (strain ATCC 33889 / DSM 1251) (Thiomicrospira denitrificans (strain ATCC 33889 / DSM 1251)), this protein is Chorismate synthase.